Reading from the N-terminus, the 341-residue chain is UDP-3-O-acylglucosamine N-acyltransferase 2 (341 aa).

Histidine 254 functions as the Proton acceptor in the catalytic mechanism.

The protein belongs to the transferase hexapeptide repeat family. LpxD subfamily. Homotrimer.

It catalyses the reaction a UDP-3-O-[(3R)-3-hydroxyacyl]-alpha-D-glucosamine + a (3R)-hydroxyacyl-[ACP] = a UDP-2-N,3-O-bis[(3R)-3-hydroxyacyl]-alpha-D-glucosamine + holo-[ACP] + H(+). The protein operates within bacterial outer membrane biogenesis; LPS lipid A biosynthesis. Functionally, catalyzes the N-acylation of UDP-3-O-acylglucosamine using 3-hydroxyacyl-ACP as the acyl donor. Is involved in the biosynthesis of lipid A, a phosphorylated glycolipid that anchors the lipopolysaccharide to the outer membrane of the cell. This chain is UDP-3-O-acylglucosamine N-acyltransferase 2, found in Nitrobacter winogradskyi (strain ATCC 25391 / DSM 10237 / CIP 104748 / NCIMB 11846 / Nb-255).